Here is a 196-residue protein sequence, read N- to C-terminus: MSTLPSTDPPPLPASTSSQQPAVHIPPPSYLDPTTYPQTLYLDPERIFIELTYHPLSPSTYLAHTRSPAAGANVLFLGTTRDTFEDKPVARLAYTSYAPLALRTLSSIARDAVAKHGLCGVSIAHRLGDVAVGEESIAIAISAPHRGAAWRAGEEVLEECKRRVEIWKREEFVGEPPGQGEWRANRDTDPEGKSTS.

The interval 1 to 29 (MSTLPSTDPPPLPASTSSQQPAVHIPPPS) is disordered. Substrate is bound by residues 145-146 (HR), lysine 161, and 168-170 (KRE). The segment at 174–196 (GEPPGQGEWRANRDTDPEGKSTS) is disordered. Positions 183–196 (RANRDTDPEGKSTS) are enriched in basic and acidic residues.

The protein belongs to the MoaE family. MOCS2B subfamily. As to quaternary structure, heterotetramer; composed of 2 small (MOCS2A) and 2 large (MOCS2B) subunits.

The protein localises to the cytoplasm. The catalysed reaction is 2 [molybdopterin-synthase sulfur-carrier protein]-C-terminal-Gly-aminoethanethioate + cyclic pyranopterin phosphate + H2O = molybdopterin + 2 [molybdopterin-synthase sulfur-carrier protein]-C-terminal Gly-Gly + 2 H(+). Its pathway is cofactor biosynthesis; molybdopterin biosynthesis. In terms of biological role, catalytic subunit of the molybdopterin synthase complex, a complex that catalyzes the conversion of precursor Z into molybdopterin. Acts by mediating the incorporation of 2 sulfur atoms from thiocarboxylated MOCS2A into precursor Z to generate a dithiolene group. The sequence is that of Molybdopterin synthase catalytic subunit from Coccidioides immitis (strain RS) (Valley fever fungus).